A 430-amino-acid polypeptide reads, in one-letter code: CC-adding tRNA nucleotidyltransferase (430 aa).

33–36 (GCVR) is a binding site for CTP. 2 residues coordinate Mg(2+): aspartate 46 and aspartate 48. Residues 108-109 (RD), asparagine 113, 150-159 (DPLRIVRAYR), and arginine 190 each bind CTP.

Belongs to the tRNA nucleotidyltransferase/poly(A) polymerase family. Mg(2+) is required as a cofactor.

The catalysed reaction is a tRNA precursor + 2 CTP = a tRNA with a 3' CC end + 2 diphosphate. Its function is as follows. tRNA nucleotidyltransferase involved in the synthesis of the tRNA CCA terminus. Adds the two cytidine residues to tRNA. The polypeptide is CC-adding tRNA nucleotidyltransferase (Geobacter sulfurreducens (strain ATCC 51573 / DSM 12127 / PCA)).